The primary structure comprises 283 residues: MPELPEVETVRRGLAPVLEGARIAQAAVNRPDLRWPFPDNMAQRLTGATVTALRRRSKYILADLDTGETLLIHLGMSGRMQISGDVIGSFHHTHPAAAKHDHVVLDTDAGARITFNDARRFGAMDLMDTATQDQHWLLRDLGPEPLGNAFNEAHLVAAFKGKRSPVKTALLDQRIVSGLGNIYVCEALWRAGISPLRQAGKIAAVRVATLVPIIRDVLTEAIEAGGSSLRDHRQATGELGYFQHTFRVYGREGQRCQTPDCAEKILRKVQSGRSSFYCPACQR.

P2 acts as the Schiff-base intermediate with DNA in catalysis. E3 acts as the Proton donor in catalysis. The active-site Proton donor; for beta-elimination activity is the K58. 3 residues coordinate DNA: H100, R119, and K162. An FPG-type zinc finger spans residues 247–283; sequence RVYGREGQRCQTPDCAEKILRKVQSGRSSFYCPACQR. R273 acts as the Proton donor; for delta-elimination activity in catalysis.

The protein belongs to the FPG family. In terms of assembly, monomer. The cofactor is Zn(2+).

It catalyses the reaction Hydrolysis of DNA containing ring-opened 7-methylguanine residues, releasing 2,6-diamino-4-hydroxy-5-(N-methyl)formamidopyrimidine.. It carries out the reaction 2'-deoxyribonucleotide-(2'-deoxyribose 5'-phosphate)-2'-deoxyribonucleotide-DNA = a 3'-end 2'-deoxyribonucleotide-(2,3-dehydro-2,3-deoxyribose 5'-phosphate)-DNA + a 5'-end 5'-phospho-2'-deoxyribonucleoside-DNA + H(+). Functionally, involved in base excision repair of DNA damaged by oxidation or by mutagenic agents. Acts as a DNA glycosylase that recognizes and removes damaged bases. Has a preference for oxidized purines, such as 7,8-dihydro-8-oxoguanine (8-oxoG). Has AP (apurinic/apyrimidinic) lyase activity and introduces nicks in the DNA strand. Cleaves the DNA backbone by beta-delta elimination to generate a single-strand break at the site of the removed base with both 3'- and 5'-phosphates. The sequence is that of Formamidopyrimidine-DNA glycosylase from Jannaschia sp. (strain CCS1).